The chain runs to 678 residues: Proprotein convertase subtilisin/kexin type 4 (678 aa).

The N-terminal stretch at 1–26 is a signal peptide; the sequence is MRPSQTALWLGLVLSLALLAVGWASA. Positions 27–110 are excised as a propeptide; the sequence is RPPIYVSSWA…QQTLRRRVKR (84 aa). The Peptidase S8 domain occupies 123-437; sequence QWYMNKEIEQ…YGLLDAGLLV (315 aa). Catalysis depends on charge relay system residues Asp-155, His-196, and Ser-370. Residues 446–580 enclose the P/Homo B domain; that stretch reads TKPQKKCTIR…TLLLYGTAED (135 aa). An N-linked (GlcNAc...) asparagine glycan is attached at Asn-472.

This sequence belongs to the peptidase S8 family. Furin subfamily. The proPCSK4 form interacts with HSPA5; the interaction takes place at the endoplasmic reticulum. N-glycosylated. Post-translationally, synthesized in the endoplasmic reticulum as a zymogen, is matured by autocatalytic cleavage between the prodomain and the catalytic domain. Expressed abundantly in the testis. High levels seen in germ cells but not in Leydig, Sertoli or peritubular cells. Expressed in the pachytene spermatocytes and the round spermatids but not in the elongating spermatids. May be expressed within hormonally stimulated ovaries.

The protein resides in the cytoplasmic vesicle. Its subcellular location is the secretory vesicle. The protein localises to the acrosome membrane. Its function is as follows. Proprotein convertase involved in the processing of hormone and other protein precursors at sites comprised of pairs of basic amino acid residues. In males, important for ADAM2 processing as well as other acrosomal proteins with roles in fertilization and critical for normal fertilization events such as sperm capacitation, acrosome reaction and binding of sperm to zona pellucida. Plays also a role in female fertility, involved in the regulation of trophoblast migration and placental development, may be through the proteolytical processing and activation of proteins such as IGF2. May also participate in folliculogenesis in the ovaries. This chain is Proprotein convertase subtilisin/kexin type 4 (Pcsk4), found in Rattus norvegicus (Rat).